Consider the following 5104-residue polypeptide: Malformin synthetase mlfA (5104 aa).

Residues 225–616 are adenylation 1; sequence ERHAVNRPHS…CGRADTQVKL (392 aa). A Carrier 1 domain is found at 757–830; it reads SRLEQEIQLA…EAASLAEVQE (74 aa). Ser-791 is subject to O-(pantetheine 4'-phosphoryl)serine. A condensation 1 region spans residues 868 to 1299; that stretch reads EDVFPCTTMQ…ALNTLSLLQA (432 aa). The interval 1327 to 1716 is adenylation 2; the sequence is DRWVTRQPEG…GRKDTQVKLR (390 aa). The Carrier 2 domain maps to 1854 to 1931; it reads TPASELERTL…QLAAEFGGPA (78 aa). Ser-1891 is subject to O-(pantetheine 4'-phosphoryl)serine. 2 disordered regions span residues 1928 to 1961 and 1998 to 2025; these read GGPAGQSASSASSTTEERFTFSTPDDSSTNDGVD and TNKTPSVSSSSSSSSSSEKKKKAAKVDS. Low complexity-rich tracts occupy residues 1934 to 1958 and 2003 to 2013; these read SASSASSTTEERFTFSTPDDSSTND and SVSSSSSSSSS. The condensation 2 stretch occupies residues 2066–2481; the sequence is EDIYPATPLQ…TVSYSDKEAL (416 aa). Positions 2504-2896 are adenylation 3; sequence VRTPHAPAVC…IGRRDGQLKL (393 aa). A Carrier 3 domain is found at 3032–3108; that stretch reads RPVTSQEREM…QLICHLNTIR (77 aa). Ser-3069 carries the O-(pantetheine 4'-phosphoryl)serine modification. 2 condensation regions span residues 3125–3590 and 3611–4029; these read WVAL…TYDQ and NIYP…EQLV. The tract at residues 4054 to 4444 is adenylation 4; that stretch reads HSSREAVCAW…VGRKDNQIKF (391 aa). In terms of domain architecture, Carrier 4 spans 4578–4654; that stretch reads MPSTAAERKM…DLSDQARSLI (77 aa). At Ser-4615 the chain carries O-(pantetheine 4'-phosphoryl)serine. Residues 4691–5018 are condensation 5; it reads DVLPTTSFQR…LQTIVQHQNN (328 aa).

This sequence belongs to the NRP synthetase family.

Its pathway is secondary metabolite biosynthesis. In terms of biological role, nonribosomal peptide synthetase; part of the gene cluster that mediates the biosynthesis of malformins, cyclic pentapeptides with a disulfide bond between 2 consecutive cysteins, that show potential anti-tumor as well as antimalarial and antitrypanosomal properties. The nonribosomal peptide synthetase mlfA is responsible of the formation of the cyclic pentapeptide. The malformin biosynthesis clusters in malformin-producing fungi also contain enzymes involved in the formation of the disulfide bond between the two consecutive cysteins within malformins, in addition to additional tailoring enzymes such as methyltransferases or oxidoreductases. They are also composed of up to 4 major facilitator superfamily transporters, and transcription factors probably involved in the regulation of the expression of those clusters. The polypeptide is Malformin synthetase mlfA (Aspergillus vadensis (strain CBS 113365 / IMI 142717 / IBT 24658)).